Here is a 270-residue protein sequence, read N- to C-terminus: Regulatory protein RecX (270 aa).

Belongs to the RecX family.

It localises to the cytoplasm. Modulates RecA activity. The polypeptide is Regulatory protein RecX (Bacillus mycoides (strain KBAB4) (Bacillus weihenstephanensis)).